The following is a 683-amino-acid chain: DNA ligase (683 aa).

Residues 36 to 40 (DAEYD), 85 to 86 (SL), and glutamate 119 contribute to the NAD(+) site. Lysine 121 (N6-AMP-lysine intermediate) is an active-site residue. NAD(+)-binding residues include arginine 142, glutamate 179, lysine 295, and lysine 319. Zn(2+) is bound by residues cysteine 413, cysteine 416, cysteine 431, and cysteine 437. Residues 596 to 683 (TETLPLSGQT…EHQAHLGGEA (88 aa)) form the BRCT domain.

The protein belongs to the NAD-dependent DNA ligase family. LigA subfamily. Mg(2+) serves as cofactor. Requires Mn(2+) as cofactor.

The enzyme catalyses NAD(+) + (deoxyribonucleotide)n-3'-hydroxyl + 5'-phospho-(deoxyribonucleotide)m = (deoxyribonucleotide)n+m + AMP + beta-nicotinamide D-nucleotide.. Functionally, DNA ligase that catalyzes the formation of phosphodiester linkages between 5'-phosphoryl and 3'-hydroxyl groups in double-stranded DNA using NAD as a coenzyme and as the energy source for the reaction. It is essential for DNA replication and repair of damaged DNA. The chain is DNA ligase from Hahella chejuensis (strain KCTC 2396).